Consider the following 355-residue polypeptide: Guanine nucleotide-binding protein G(i) subunit alpha-2 (355 aa).

Glycine 2 carries the N-myristoyl glycine lipid modification. A lipid anchor (S-palmitoyl cysteine) is attached at cysteine 3. Residues 32-355 (REVKLLLLGA…KNNLKDCGLF (324 aa)) enclose the G-alpha domain. Positions 35 to 48 (KLLLLGAGESGKST) are G1 motif. GTP is bound by residues 40–47 (GAGESGKS), 176–182 (LRTRVKT), 201–205 (DVGGQ), 270–273 (NKKD), and alanine 327. Mg(2+) contacts are provided by serine 47 and threonine 182. The tract at residues 174–182 (DVLRTRVKT) is G2 motif. The tract at residues 197 to 206 (FKMFDVGGQR) is G3 motif. Residues 266 to 273 (ILFLNKKD) form a G4 motif region. The segment at 325–330 (TCATDT) is G5 motif.

The protein belongs to the G-alpha family. G(i/o/t/z) subfamily. G proteins are composed of 3 units; alpha, beta and gamma. The alpha chain contains the guanine nucleotide binding site. In this context, interacts with GNB2. Interacts with UNC5B. Interacts with GPSM1. Interacts with RGS12 and RGS14. Interacts (inactive GDP-bound form) with NUCB1 (via GBA motif); the interaction leads to activation of GNAI3. Interacts (inactive GDP-bound form) with CCDC88C/DAPLE (via GBA motif). Interacts (inactive GDP-bound form) with CCDC8A/GIV (via GBA motif). Interacts with CXCR1 and CXCR2.

It localises to the cytoplasm. The protein localises to the cytoskeleton. The protein resides in the microtubule organizing center. It is found in the centrosome. Its subcellular location is the cell membrane. It localises to the membrane. Its function is as follows. Guanine nucleotide-binding proteins (G proteins) are involved as modulators or transducers in various transmembrane signaling systems. The G(i) proteins are involved in hormonal regulation of adenylate cyclase: they inhibit the cyclase in response to beta-adrenergic stimuli. May play a role in cell division. This is Guanine nucleotide-binding protein G(i) subunit alpha-2 (GNAI2) from Canis lupus familiaris (Dog).